Consider the following 264-residue polypeptide: Molybdenum transport system permease protein ModB (264 aa).

A run of 6 helical transmembrane segments spans residues 11-31 (VYLP…AIAI), 57-77 (TAAA…LVLA), 90-110 (LILL…LYAF), 127-147 (IAFS…PYLV), 176-196 (WWRV…VLAF), and 234-254 (AAVA…LGVG). An ABC transmembrane type-1 domain is found at 51-253 (LLLSVKTAAA…VVAALVVLGV (203 aa)).

The protein belongs to the binding-protein-dependent transport system permease family. CysTW subfamily.

It is found in the cell membrane. Functionally, part of the binding-protein-dependent transport system ModABCD for molybdenum; probably responsible for the translocation of the substrate across the membrane. In Mycobacterium bovis (strain ATCC BAA-935 / AF2122/97), this protein is Molybdenum transport system permease protein ModB (modB).